A 310-amino-acid chain; its full sequence is Tyrosine recombinase XerC (310 aa).

The Core-binding (CB) domain maps to 22 to 103 (SQMLEAIEDF…SVKSFSTWAV (82 aa)). Residues 124-304 (NLPRVLGEVQ…SSQRLLEAFR (181 aa)) form the Tyr recombinase domain. Residues Arg-165, Lys-189, His-256, Arg-259, and His-282 contribute to the active site. The O-(3'-phospho-DNA)-tyrosine intermediate role is filled by Tyr-291.

This sequence belongs to the 'phage' integrase family. XerC subfamily. Forms a cyclic heterotetrameric complex composed of two molecules of XerC and two molecules of XerD.

It is found in the cytoplasm. Site-specific tyrosine recombinase, which acts by catalyzing the cutting and rejoining of the recombining DNA molecules. The XerC-XerD complex is essential to convert dimers of the bacterial chromosome into monomers to permit their segregation at cell division. It also contributes to the segregational stability of plasmids. This chain is Tyrosine recombinase XerC, found in Corynebacterium efficiens (strain DSM 44549 / YS-314 / AJ 12310 / JCM 11189 / NBRC 100395).